The primary structure comprises 139 residues: Putative lipoprotein LpqV (139 aa).

An N-terminal signal peptide occupies residues 1–25 (MRPSRYAPLLCAMVLALAWLSAVAG). Residue cysteine 26 is the site of N-palmitoyl cysteine attachment. A lipid anchor (S-diacylglycerol cysteine) is attached at cysteine 26.

The protein localises to the cell membrane. The sequence is that of Putative lipoprotein LpqV (lpqV) from Mycobacterium bovis (strain ATCC BAA-935 / AF2122/97).